The chain runs to 1029 residues: Protein translocase subunit SecA (1029 aa).

ATP is bound by residues glutamine 143, 161 to 165 (GEGKT), and aspartate 661. The segment at 953–1029 (EQEQKKSQVQ…GKKYKNCCGK (77 aa)) is disordered. Composition is skewed to basic and acidic residues over residues 966–975 (LVARHEKAET) and 984–996 (PEGR…ENGK). Cysteine 1015, cysteine 1017, cysteine 1026, and cysteine 1027 together coordinate Zn(2+).

It belongs to the SecA family. In terms of assembly, monomer and homodimer. Part of the essential Sec protein translocation apparatus which comprises SecA, SecYEG and auxiliary proteins SecDF. Other proteins may also be involved. The cofactor is Zn(2+).

It is found in the cell inner membrane. The protein resides in the cytoplasm. It carries out the reaction ATP + H2O + cellular proteinSide 1 = ADP + phosphate + cellular proteinSide 2.. Its function is as follows. Part of the Sec protein translocase complex. Interacts with the SecYEG preprotein conducting channel. Has a central role in coupling the hydrolysis of ATP to the transfer of proteins into and across the cell membrane, serving as an ATP-driven molecular motor driving the stepwise translocation of polypeptide chains across the membrane. The sequence is that of Protein translocase subunit SecA from Chlorobium phaeobacteroides (strain BS1).